Here is a 231-residue protein sequence, read N- to C-terminus: GTP-binding protein RHO3 (231 aa).

A GTP-binding site is contributed by 23 to 30 (GDGACGKT). Residues 45 to 53 (YEPTVFENY) carry the Effector region motif. GTP is bound by residues 70–74 (DTAGQ) and 128–131 (LKCD). Residues 139-150 (SNAITPNNIQQD) are compositionally biased toward polar residues. Positions 139–165 (SNAITPNNIQQDNSVSNDNGNNINSTS) are disordered. Over residues 151–165 (NSVSNDNGNNINSTS) the composition is skewed to low complexity. Position 228 is a cysteine methyl ester (cysteine 228). Cysteine 228 carries S-farnesyl cysteine lipidation. Residues 229–231 (TIM) constitute a propeptide, removed in mature form.

It belongs to the small GTPase superfamily. Rho family. As to quaternary structure, interacts with TOS7.

It localises to the cell membrane. With respect to regulation, activity is positively regulated by the GTPase activating protein (GAP) RGD1. Functionally, plays an important role in cell growth. Required to keep the uninucleated state. Modulates morphogenesis during bud growth via directing organization of the actin cytoskeleton and the position of the secretory machinery for exocytosis. This is GTP-binding protein RHO3 from Saccharomyces cerevisiae (strain ATCC 204508 / S288c) (Baker's yeast).